A 199-amino-acid chain; its full sequence is Small ribosomal subunit protein uS5 (199 aa).

The tract at residues 1–29 is disordered; sequence MATAGRRGGAASERRERRESRRQEASPEK. A compositionally biased stretch (basic and acidic residues) spans 12–27; sequence SERRERRESRRQEASP. The 64-residue stretch at 32–95 folds into the S5 DRBM domain; the sequence is FLERVVTINR…EEAKKHFFTV (64 aa).

This sequence belongs to the universal ribosomal protein uS5 family. In terms of assembly, part of the 30S ribosomal subunit. Contacts proteins S4 and S8.

With S4 and S12 plays an important role in translational accuracy. In terms of biological role, located at the back of the 30S subunit body where it stabilizes the conformation of the head with respect to the body. The protein is Small ribosomal subunit protein uS5 of Acidothermus cellulolyticus (strain ATCC 43068 / DSM 8971 / 11B).